Reading from the N-terminus, the 83-residue chain is MPYSRDITKFITATEPEVGLPLLALQHSKSIIGVILLVICLLFILIGIIILAVGGHATAGSIFVVLSLILGGGGFFLIYKDNS.

Transmembrane regions (helical) follow at residues 31–51 (IIGV…IIIL) and 59–79 (AGSI…FLIY).

It belongs to the asfivirus EP84R family.

Its subcellular location is the virion membrane. This chain is Transmembrane protein EP84R, found in Ornithodoros (relapsing fever ticks).